The primary structure comprises 100 residues: MKLTPREKDKLLIFTAALLAERRRARGLKLNYPETIAFITAALMEAARDGKTVAEVMHYGTTLLTRDDVMEGVPEMIPDIQVEATFPDGTKLVTVHHPIP.

It belongs to the urease gamma subunit family. As to quaternary structure, heterotrimer of UreA (gamma), UreB (beta) and UreC (alpha) subunits. Three heterotrimers associate to form the active enzyme.

It is found in the cytoplasm. It carries out the reaction urea + 2 H2O + H(+) = hydrogencarbonate + 2 NH4(+). The protein operates within nitrogen metabolism; urea degradation; CO(2) and NH(3) from urea (urease route): step 1/1. The protein is Urease subunit gamma of Burkholderia thailandensis (strain ATCC 700388 / DSM 13276 / CCUG 48851 / CIP 106301 / E264).